Reading from the N-terminus, the 495-residue chain is Cytochrome P450 monooxygenase aneF (495 aa).

A helical transmembrane segment spans residues 1–21 (MIAGLVLVVLLTKYLQRVFLH). N47 carries N-linked (GlcNAc...) asparagine glycosylation. C437 contacts heme.

This sequence belongs to the cytochrome P450 family. Requires heme as cofactor.

Its subcellular location is the membrane. The catalysed reaction is dauca-4,7-diene + 3 reduced [NADPH--hemoprotein reductase] + 3 O2 = asperaculane D + 3 oxidized [NADPH--hemoprotein reductase] + 4 H2O + 4 H(+). It functions in the pathway secondary metabolite biosynthesis. Its function is as follows. Cytochrome P450 monooxygenase; part of the gene cluster that mediates the biosynthesis of aculenes, a unique type of norsesquiterpenes that contain a nordaucane skeleton linked to an L-proline moiety and are of mixed biosynthetic origin. The pathway begins with the synthesis of dauca-4,7-diene by the terpene cyclase aneC using farnesyl pyrophosphate (FPP) as substrate. The cytochrome P450 monooxygenase aneF then performs the initial oxidation at C-12 of dauca-4,7-diene to yield asperaculane D. Asperaculane D is substrate of the cytochrome P450 monooxygenase aneD for C-10 hydroxylation to yield asperaculane E. The cytochrome P450 monooxygenase aneG then converts asperaculane E into aculene D via C-2 oxidation. The monomodular nonribosomal peptide synthtase aneB adenylates L-proline and the thiohydrolase aneE transfers this activated L-proline derivative to aculenes D and C to produce respectively aculenes B and A. The dioxygenase aneA converts aculene D into aculene C, and aculene B into aculene A by introducing the 5,6-alkene moiety. Asperculanes A, B, C and F, as well as 14-prolyl asperculane C, might be shunt products of the pathway. This is Cytochrome P450 monooxygenase aneF from Aspergillus aculeatus (strain ATCC 16872 / CBS 172.66 / WB 5094).